The sequence spans 208 residues: Cytidylate kinase (208 aa).

9 to 17 (GPSASGKSS) is an ATP binding site.

The protein belongs to the cytidylate kinase family. Type 1 subfamily.

The protein resides in the cytoplasm. The enzyme catalyses CMP + ATP = CDP + ADP. The catalysed reaction is dCMP + ATP = dCDP + ADP. This is Cytidylate kinase from Thermus thermophilus (strain ATCC BAA-163 / DSM 7039 / HB27).